Reading from the N-terminus, the 199-residue chain is MIGRITGILLEKNPPQIVVDTHGVGYEIDVPMSTFYGLPATGESLSLFTHLAIREDGHFLYGFASADERAAFRQLLKVSGIGARTALSVLSGLSVSDLAQAVALQETGRLVKIPGIGKKTAERLLLELRDKLGRALPGFGASTVPGAAAQPADSRSDILNALLALGYSDKEAQSALKAIPPETGVSDGIRQALKLLSKA.

A domain I region spans residues 1 to 64 (MIGRITGILL…EDGHFLYGFA (64 aa)). The domain II stretch occupies residues 65–143 (SADERAAFRQ…RALPGFGAST (79 aa)). The tract at residues 144 to 152 (VPGAAAQPA) is flexible linker. Positions 152 to 199 (ADSRSDILNALLALGYSDKEAQSALKAIPPETGVSDGIRQALKLLSKA) are domain III.

It belongs to the RuvA family. As to quaternary structure, homotetramer. Forms an RuvA(8)-RuvB(12)-Holliday junction (HJ) complex. HJ DNA is sandwiched between 2 RuvA tetramers; dsDNA enters through RuvA and exits via RuvB. An RuvB hexamer assembles on each DNA strand where it exits the tetramer. Each RuvB hexamer is contacted by two RuvA subunits (via domain III) on 2 adjacent RuvB subunits; this complex drives branch migration. In the full resolvosome a probable DNA-RuvA(4)-RuvB(12)-RuvC(2) complex forms which resolves the HJ.

It is found in the cytoplasm. The RuvA-RuvB-RuvC complex processes Holliday junction (HJ) DNA during genetic recombination and DNA repair, while the RuvA-RuvB complex plays an important role in the rescue of blocked DNA replication forks via replication fork reversal (RFR). RuvA specifically binds to HJ cruciform DNA, conferring on it an open structure. The RuvB hexamer acts as an ATP-dependent pump, pulling dsDNA into and through the RuvAB complex. HJ branch migration allows RuvC to scan DNA until it finds its consensus sequence, where it cleaves and resolves the cruciform DNA. The chain is Holliday junction branch migration complex subunit RuvA from Aromatoleum aromaticum (strain DSM 19018 / LMG 30748 / EbN1) (Azoarcus sp. (strain EbN1)).